Reading from the N-terminus, the 343-residue chain is UPF0157 protein YqkA (343 aa).

Residues 8–144 form the N-acetyltransferase domain; that stretch reads KEATIAREIL…VKAAQGLLLS (137 aa). The interval 135–343 is UPF0157; the sequence is VKAAQGLLLS…ENDENGGFTL (209 aa).

The protein in the C-terminal section; belongs to the UPF0157 (GrpB) family.

This is UPF0157 protein YqkA (yqkA) from Bacillus subtilis (strain 168).